Consider the following 65-residue polypeptide: Muscarinic m1-toxin2 (65 aa).

Disulfide bonds link Cys-3/Cys-24, Cys-17/Cys-42, Cys-46/Cys-57, and Cys-58/Cys-63.

It belongs to the three-finger toxin family. Short-chain subfamily. Aminergic toxin sub-subfamily. In terms of assembly, monomer. As to expression, expressed by the venom gland.

It localises to the secreted. Its function is as follows. Binds irreversibly and specifically to M1 (CHRM1) muscarinic acetylcholine receptors, blocking further binding of antagonists and preventing the action of agonists. In Dendroaspis angusticeps (Eastern green mamba), this protein is Muscarinic m1-toxin2.